Here is a 125-residue protein sequence, read N- to C-terminus: Histone H2B type 1 (125 aa).

Positions 1–36 (MPEPAKSRPAPKKGSKKAVTKAQKKDGKERKRSRKE) are disordered. Position 2 is an N-acetylproline (Pro-2). Residue Glu-3 is modified to ADP-ribosyl glutamic acid. Residue Lys-6 is modified to N6-(2-hydroxyisobutyryl)lysine; alternate. Lys-6 carries the N6-(beta-hydroxybutyryl)lysine; alternate modification. Lys-6 is modified (N6-acetyllysine; alternate). Residue Lys-6 is modified to N6-butyryllysine; alternate. Position 6 is an N6-crotonyllysine; alternate (Lys-6). N6-lactoyllysine; alternate is present on Lys-6. Lys-6 is covalently cross-linked (Glycyl lysine isopeptide (Lys-Gly) (interchain with G-Cter in SUMO2); alternate). ADP-ribosylserine is present on Ser-7. A compositionally biased stretch (basic residues) spans 9–19 (PAPKKGSKKAV). Lys-12 is subject to N6-(beta-hydroxybutyryl)lysine; alternate. N6-acetyllysine; alternate occurs at positions 12 and 13. N6-crotonyllysine; alternate occurs at positions 12 and 13. At Lys-12 the chain carries N6-lactoyllysine; alternate. Lys-13 is subject to N6-(2-hydroxyisobutyryl)lysine; alternate. Ser-15 carries the phosphoserine; by STK4/MST1 modification. Lys-16, Lys-17, Lys-21, and Lys-24 each carry N6-acetyllysine; alternate. N6-crotonyllysine; alternate is present on residues Lys-16, Lys-17, Lys-21, and Lys-24. Residues Lys-16, Lys-17, Lys-21, and Lys-24 each carry the N6-lactoyllysine; alternate modification. Lys-17 is modified (N6-glutaryllysine; alternate). 2 positions are modified to N6-(2-hydroxyisobutyryl)lysine; alternate: Lys-21 and Lys-24. Lys-21 bears the N6-(beta-hydroxybutyryl)lysine; alternate mark. Lys-21 carries the N6-butyryllysine; alternate modification. Lys-21 participates in a covalent cross-link: Glycyl lysine isopeptide (Lys-Gly) (interchain with G-Cter in SUMO2); alternate. Lys-25 bears the N6-(2-hydroxyisobutyryl)lysine mark. Residue Lys-35 is modified to N6-(2-hydroxyisobutyryl)lysine; alternate. Lys-35 bears the N6-(beta-hydroxybutyryl)lysine; alternate mark. Lys-35 is modified (N6-crotonyllysine; alternate). Lys-35 bears the N6-glutaryllysine; alternate mark. Position 35 is an N6-succinyllysine; alternate (Lys-35). A Glycyl lysine isopeptide (Lys-Gly) (interchain with G-Cter in ubiquitin); alternate cross-link involves residue Lys-35. Glu-36 is subject to PolyADP-ribosyl glutamic acid. Phosphoserine; by AMPK is present on Ser-37. Lys-44, Lys-47, and Lys-58 each carry N6-(2-hydroxyisobutyryl)lysine; alternate. Lys-44 carries the post-translational modification N6-lactoyllysine; alternate. N6-glutaryllysine; alternate occurs at positions 44 and 47. N6-methyllysine; alternate is present on Lys-47. Lys-58 carries the N6,N6-dimethyllysine; alternate modification. Arg-79 bears the Dimethylated arginine mark. Lys-85 is subject to N6-(2-hydroxyisobutyryl)lysine; alternate. Position 85 is an N6-acetyllysine; alternate (Lys-85). Lys-85 bears the N6-lactoyllysine; alternate mark. Lys-85 is modified (N6,N6,N6-trimethyllysine; alternate). Arg-86 and Arg-92 each carry omega-N-methylarginine. Lys-108 is subject to N6-(2-hydroxyisobutyryl)lysine; alternate. Lys-108 carries the post-translational modification N6-lactoyllysine; alternate. Lys-108 is subject to N6-glutaryllysine; alternate. N6-methyllysine; alternate is present on Lys-108. O-linked (GlcNAc) serine glycosylation is present at Ser-112. Position 115 is a phosphothreonine (Thr-115). 2 positions are modified to N6-(2-hydroxyisobutyryl)lysine; alternate: Lys-116 and Lys-120. Position 116 is an N6-(beta-hydroxybutyryl)lysine; alternate (Lys-116). An N6-lactoyllysine; alternate mark is found at Lys-116 and Lys-120. N6-glutaryllysine; alternate is present on residues Lys-116 and Lys-120. N6-succinyllysine; alternate occurs at positions 116 and 120. An N6-methylated lysine; alternate modification is found at Lys-116. Lys-120 participates in a covalent cross-link: Glycyl lysine isopeptide (Lys-Gly) (interchain with G-Cter in ubiquitin); alternate.

This sequence belongs to the histone H2B family. As to quaternary structure, the nucleosome is a histone octamer containing two molecules each of H2A, H2B, H3 and H4 assembled in one H3-H4 heterotetramer and two H2A-H2B heterodimers. The octamer wraps approximately 147 bp of DNA. Post-translationally, monoubiquitination at Lys-35 (H2BK34Ub) by the MSL1/MSL2 dimer is required for histone H3 'Lys-4' (H3K4me) and 'Lys-79' (H3K79me) methylation and transcription activation at specific gene loci, such as HOXA9 and MEIS1 loci. Similarly, monoubiquitination at Lys-120 (H2BK120Ub) by the RNF20/40 complex gives a specific tag for epigenetic transcriptional activation and is also prerequisite for histone H3 'Lys-4' and 'Lys-79' methylation. It also functions cooperatively with the FACT dimer to stimulate elongation by RNA polymerase II. H2BK120Ub also acts as a regulator of mRNA splicing: deubiquitination by USP49 is required for efficient cotranscriptional splicing of a large set of exons. In terms of processing, phosphorylated on Ser-15 (H2BS14ph) by STK4/MST1 during apoptosis; which facilitates apoptotic chromatin condensation. Also phosphorylated on Ser-15 in response to DNA double strand breaks (DSBs), and in correlation with somatic hypermutation and immunoglobulin class-switch recombination. Phosphorylation at Ser-37 (H2BS36ph) by AMPK in response to stress promotes transcription. ADP-ribosylated by PARP1 or PARP2 on Ser-7 (H2BS6ADPr) in response to DNA damage. H2BS6ADPr promotes recruitment of CHD1L. Mono-ADP-ribosylated on Glu-3 (H2BE2ADPr) by PARP3 in response to single-strand breaks. Poly ADP-ribosylation on Glu-36 (H2BE35ADPr) by PARP1 regulates adipogenesis: it inhibits phosphorylation at Ser-37 (H2BS36ph), thereby blocking expression of pro-adipogenetic genes. Post-translationally, crotonylation (Kcr) is specifically present in male germ cells and marks testis-specific genes in post-meiotic cells, including X-linked genes that escape sex chromosome inactivation in haploid cells. Crotonylation marks active promoters and enhancers and confers resistance to transcriptional repressors. It is also associated with post-meiotically activated genes on autosomes. In terms of processing, glcNAcylation at Ser-112 promotes monoubiquitination of Lys-120. It fluctuates in response to extracellular glucose, and associates with transcribed genes. Lactylated in macrophages by EP300/P300 by using lactoyl-CoA directly derived from endogenous or exogenous lactate, leading to stimulates gene transcription.

It is found in the nucleus. The protein localises to the chromosome. Functionally, core component of nucleosome. Nucleosomes wrap and compact DNA into chromatin, limiting DNA accessibility to the cellular machineries which require DNA as a template. Histones thereby play a central role in transcription regulation, DNA repair, DNA replication and chromosomal stability. DNA accessibility is regulated via a complex set of post-translational modifications of histones, also called histone code, and nucleosome remodeling. Has broad antibacterial activity. May contribute to the formation of the functional antimicrobial barrier of the colonic epithelium, and to the bactericidal activity of amniotic fluid. In Rattus norvegicus (Rat), this protein is Histone H2B type 1.